A 222-amino-acid polypeptide reads, in one-letter code: Protein-L-isoaspartate O-methyltransferase (222 aa).

Ser-69 is an active-site residue.

The protein belongs to the methyltransferase superfamily. L-isoaspartyl/D-aspartyl protein methyltransferase family.

The protein localises to the cytoplasm. The catalysed reaction is [protein]-L-isoaspartate + S-adenosyl-L-methionine = [protein]-L-isoaspartate alpha-methyl ester + S-adenosyl-L-homocysteine. In terms of biological role, catalyzes the methyl esterification of L-isoaspartyl residues in peptides and proteins that result from spontaneous decomposition of normal L-aspartyl and L-asparaginyl residues. It plays a role in the repair and/or degradation of damaged proteins. The polypeptide is Protein-L-isoaspartate O-methyltransferase (Caulobacter vibrioides (strain NA1000 / CB15N) (Caulobacter crescentus)).